Consider the following 366-residue polypeptide: Ribosomal RNA large subunit methyltransferase M (366 aa).

S-adenosyl-L-methionine-binding positions include Ser-188, 221-224, Asp-240, Asp-260, and Asp-277; that span reads CPGG. The active-site Proton acceptor is Lys-306.

Belongs to the class I-like SAM-binding methyltransferase superfamily. RNA methyltransferase RlmE family. RlmM subfamily. As to quaternary structure, monomer.

The protein resides in the cytoplasm. The enzyme catalyses cytidine(2498) in 23S rRNA + S-adenosyl-L-methionine = 2'-O-methylcytidine(2498) in 23S rRNA + S-adenosyl-L-homocysteine + H(+). Catalyzes the 2'-O-methylation at nucleotide C2498 in 23S rRNA. The chain is Ribosomal RNA large subunit methyltransferase M from Klebsiella pneumoniae (strain 342).